A 425-amino-acid polypeptide reads, in one-letter code: F-box/LRR-repeat protein At3g59250 (425 aa).

Positions 6 to 54 (KDKISNLPEALICHILSFLPIEDSALTSVLSKRWRYLFAFRPNLVFDDS) constitute an F-box domain. LRR repeat units follow at residues 86 to 113 (DLQV…RIES), 138 to 163 (MLGK…VLNN), 185 to 210 (CTES…KYSD), 264 to 293 (CLSA…TIKT), and 294 to 319 (NQSV…VFEG).

This Arabidopsis thaliana (Mouse-ear cress) protein is F-box/LRR-repeat protein At3g59250.